Consider the following 309-residue polypeptide: Homoserine O-acetyltransferase (309 aa).

Cys-142 functions as the Acyl-thioester intermediate in the catalytic mechanism. Lys-163 and Ser-192 together coordinate substrate. The Proton acceptor role is filled by His-235. The active site involves Glu-237. Arg-249 lines the substrate pocket.

It belongs to the MetA family.

The protein resides in the cytoplasm. It catalyses the reaction L-homoserine + acetyl-CoA = O-acetyl-L-homoserine + CoA. It functions in the pathway amino-acid biosynthesis; L-methionine biosynthesis via de novo pathway; O-acetyl-L-homoserine from L-homoserine: step 1/1. Its function is as follows. Transfers an acetyl group from acetyl-CoA to L-homoserine, forming acetyl-L-homoserine. This Petrotoga mobilis (strain DSM 10674 / SJ95) protein is Homoserine O-acetyltransferase.